The chain runs to 173 residues: Photosystem I assembly protein Ycf3 (173 aa).

TPR repeat units follow at residues 35–68, 72–105, and 120–153; these read AFAYYRDGMSAQADGEYAEALENYYEALNLEDDP, SYILYNIGLIHASNGEHDQALEYYHQALENNPRM, and GEKAKETGNSRDANSYFDQAAEYWKQAISLAPNN.

This sequence belongs to the Ycf3 family.

The protein resides in the cellular thylakoid membrane. Its function is as follows. Essential for the assembly of the photosystem I (PSI) complex. May act as a chaperone-like factor to guide the assembly of the PSI subunits. The sequence is that of Photosystem I assembly protein Ycf3 from Trichodesmium erythraeum (strain IMS101).